A 117-amino-acid chain; its full sequence is Large ribosomal subunit protein bL20c (117 aa).

It belongs to the bacterial ribosomal protein bL20 family.

The protein resides in the plastid. It is found in the chloroplast. Functionally, binds directly to 23S ribosomal RNA and is necessary for the in vitro assembly process of the 50S ribosomal subunit. It is not involved in the protein synthesizing functions of that subunit. The protein is Large ribosomal subunit protein bL20c of Populus trichocarpa (Western balsam poplar).